Reading from the N-terminus, the 570-residue chain is MSRLEAKKPSLCKSEPLTTERVRTTLSVFKRIVTSCYGPSGRLKQLHNGFGGYVCTTSQSSALLSHLLVTHPILKILTTSIQNHVSSFSDCGLFTAILCCNLIENVQRLDLTPTTVIRLNKHLLSLCISYLKSETCGCRIPVDFGSTQILLCFVRSVLTSKPACMLTRKETEHVSALILRAFLLTIPENAEGHIILGKSLIVPLKGQRVIDSTVLPGILIEMSEVQLMRLLPIKKSTALKVALFCTTLSGDISDTGEGTVVVSYGVSLENAALDQLLNLGRQLISDHVDLVLCQKVIHPSLKQFLNMHRIIAIDRIGVTLMEPLTKMTGTQPIGSLGSISPNSYGSVKDVCTAKFGSKHFFHLIPNEATICSLLLCNRNDTAWDELKLTCQTALHVLQLTLKEPWALLGGGCTETHLAAYIRHKTHNDPESILKDDECTQTELQLIAEAFCSALESVVGSLEHDGGEILTDMKYGHLWSVQADSPCVANWPDLLSQCGCGLYNSQEELNWSFLRSTRRPFVPQTCLPHEAVGSASNLTLDCLTAKLSGLQVAVETANLILDLSYVIEDKN.

ATP is bound at residue 192-199 (GHIILGKS). The substrate-binding apical domain stretch occupies residues 198–370 (KSLIVPLKGQ…FHLIPNEATI (173 aa)).

Belongs to the TCP-1 chaperonin family. In terms of assembly, component of a complex composed at least of MKKS, BBS10, BBS12, TCP1, CCT2, CCT3, CCT4, CCT5 and CCT8. Interacts with STUB1. Interacts with BBS2 (via coiled coil domain). Interacts with CCDC28B. Interacts with BBS12. Interacts with SMARCC1, a component of the SWI/SNF complexes; the interaction takes place predominantly in the cytoplasm and may modulate SMARCC1 location. Interacts with DLEC1.

It is found in the cytoplasm. The protein localises to the cytoskeleton. It localises to the microtubule organizing center. Its subcellular location is the centrosome. The protein resides in the cytosol. It is found in the nucleus. Probable molecular chaperone that assists the folding of proteins upon ATP hydrolysis. Plays a role in the assembly of BBSome, a complex involved in ciliogenesis regulating transports vesicles to the cilia. May play a role in protein processing in limb, cardiac and reproductive system development. May play a role in cytokinesis. This chain is Molecular chaperone MKKS (MKKS), found in Pongo abelii (Sumatran orangutan).